A 167-amino-acid polypeptide reads, in one-letter code: Endoribonuclease YbeY (167 aa).

The interval 64 to 101 is disordered; the sequence is GKPTNVLSWPSEERASEEPGMAPEPPEPGDPEDPEPLG. Residues 90–99 are compositionally biased toward acidic residues; it reads EPGDPEDPEP. Residues His131, His135, and His141 each contribute to the Zn(2+) site.

Belongs to the endoribonuclease YbeY family. It depends on Zn(2+) as a cofactor.

Its subcellular location is the cytoplasm. Its function is as follows. Single strand-specific metallo-endoribonuclease involved in late-stage 70S ribosome quality control and in maturation of the 3' terminus of the 16S rRNA. The chain is Endoribonuclease YbeY from Cereibacter sphaeroides (strain ATCC 17023 / DSM 158 / JCM 6121 / CCUG 31486 / LMG 2827 / NBRC 12203 / NCIMB 8253 / ATH 2.4.1.) (Rhodobacter sphaeroides).